The following is a 159-amino-acid chain: 3-hydroxyacyl-[acyl-carrier-protein] dehydratase FabZ (159 aa).

Residue His-58 is part of the active site.

The protein belongs to the thioester dehydratase family. FabZ subfamily.

The protein localises to the cytoplasm. It catalyses the reaction a (3R)-hydroxyacyl-[ACP] = a (2E)-enoyl-[ACP] + H2O. Involved in unsaturated fatty acids biosynthesis. Catalyzes the dehydration of short chain beta-hydroxyacyl-ACPs and long chain saturated and unsaturated beta-hydroxyacyl-ACPs. The sequence is that of 3-hydroxyacyl-[acyl-carrier-protein] dehydratase FabZ from Helicobacter pylori (strain HPAG1).